The following is a 689-amino-acid chain: Glycine--tRNA ligase beta subunit (689 aa).

It belongs to the class-II aminoacyl-tRNA synthetase family. Tetramer of two alpha and two beta subunits.

The protein localises to the cytoplasm. It carries out the reaction tRNA(Gly) + glycine + ATP = glycyl-tRNA(Gly) + AMP + diphosphate. This chain is Glycine--tRNA ligase beta subunit, found in Yersinia pseudotuberculosis serotype O:1b (strain IP 31758).